We begin with the raw amino-acid sequence, 358 residues long: NADH-quinone oxidoreductase subunit H (358 aa).

8 helical membrane-spanning segments follow: residues 30 to 50 (IVIGVCIMLAYAVIAIIMIFM), 96 to 116 (FLYNLAPYIVILASIMAFSCL), 129 to 149 (VGIFFLLAASSIGVVGILLAG), 165 to 185 (GAQMISYELSVGLSILTIVIL), 201 to 221 (GWFLFKGHIPALIAFIIYLIA), 264 to 284 (LFIIAAVATTIFLGGWMPLHI), 297 to 317 (IPGFIWFFGKSFFVVWLLMWI), and 336 to 356 (YLVPIGLCNLLLMVIIVVFKL).

The protein belongs to the complex I subunit 1 family. In terms of assembly, NDH-1 is composed of 14 different subunits. Subunits NuoA, H, J, K, L, M, N constitute the membrane sector of the complex.

Its subcellular location is the cell inner membrane. It catalyses the reaction a quinone + NADH + 5 H(+)(in) = a quinol + NAD(+) + 4 H(+)(out). Functionally, NDH-1 shuttles electrons from NADH, via FMN and iron-sulfur (Fe-S) centers, to quinones in the respiratory chain. The immediate electron acceptor for the enzyme in this species is believed to be ubiquinone. Couples the redox reaction to proton translocation (for every two electrons transferred, four hydrogen ions are translocated across the cytoplasmic membrane), and thus conserves the redox energy in a proton gradient. This subunit may bind ubiquinone. This Phocaeicola vulgatus (strain ATCC 8482 / DSM 1447 / JCM 5826 / CCUG 4940 / NBRC 14291 / NCTC 11154) (Bacteroides vulgatus) protein is NADH-quinone oxidoreductase subunit H.